The primary structure comprises 306 residues: MRVVFMGTPEFSVPILTAIIGHGYEVVAAYTQPPRPAGRRGLELTRSPVHEKAEQFGIPVFTPKSLKGAEEQDVFASLEADVAIVVAYGLLLPKAILDAPRLGCYNGHASLLPRWRGAAPIQRAIMAGDAETGMMIMKMDEGLDTGLVAMAEKVAITPDMTAGELHDRLSMIGADLMIRALGALERESLALQPQAEEGVTYAAKIDKAEARIDWSKPAKDVHNSIRGLSPFPGAWCEMEINGAVERVKLQRSTLGEGSGAPGTVLDDRLTIACGEGAVRLATLQHSGGKPLPAQEFLRGQRVTKVL.

Residue 110-113 (SLLP) coordinates (6S)-5,6,7,8-tetrahydrofolate.

The protein belongs to the Fmt family.

It catalyses the reaction L-methionyl-tRNA(fMet) + (6R)-10-formyltetrahydrofolate = N-formyl-L-methionyl-tRNA(fMet) + (6S)-5,6,7,8-tetrahydrofolate + H(+). Functionally, attaches a formyl group to the free amino group of methionyl-tRNA(fMet). The formyl group appears to play a dual role in the initiator identity of N-formylmethionyl-tRNA by promoting its recognition by IF2 and preventing the misappropriation of this tRNA by the elongation apparatus. This is Methionyl-tRNA formyltransferase from Brucella suis (strain ATCC 23445 / NCTC 10510).